A 193-amino-acid polypeptide reads, in one-letter code: Zinc finger CCHC domain-containing protein 17 (193 aa).

In terms of domain architecture, S1 motif; truncated spans 1-40 (MSSCRVDKPSEIVDVGDKVWVKLIGREMKNDRIKVSLSMK). Phosphoserine is present on Ser-66. The CCHC-type zinc finger occupies 83 to 100 (TTCKKCGCKGHFAKDCFM). Position 96 is an N6-acetyllysine (Lys-96). Positions 113-193 (EEEEKEEAKS…KKKHKKKHKE (81 aa)) are disordered. The span at 118–129 (EEAKSAEFEKPV) shows a compositional bias: basic and acidic residues. Basic residues predominate over residues 134-150 (PSRKRKKEKKKKKHRDR). Ser-135 carries the post-translational modification Phosphoserine. The span at 163–177 (DTGKRARHTSKDSKA) shows a compositional bias: basic and acidic residues. Over residues 178–193 (AKKKKKKKKHKKKHKE) the composition is skewed to basic residues.

May interact with PNN. May associate with the 60 S ribosomal subunit.

Its subcellular location is the nucleus. The protein localises to the nucleolus. In Macaca fascicularis (Crab-eating macaque), this protein is Zinc finger CCHC domain-containing protein 17 (ZCCHC17).